We begin with the raw amino-acid sequence, 807 residues long: Glycerol-3-phosphate acyltransferase (807 aa).

The HXXXXD motif motif lies at 308–313; the sequence is CHRSHM.

It belongs to the GPAT/DAPAT family.

Its subcellular location is the cell inner membrane. It catalyses the reaction sn-glycerol 3-phosphate + an acyl-CoA = a 1-acyl-sn-glycero-3-phosphate + CoA. It participates in phospholipid metabolism; CDP-diacylglycerol biosynthesis; CDP-diacylglycerol from sn-glycerol 3-phosphate: step 1/3. The protein is Glycerol-3-phosphate acyltransferase of Shewanella halifaxensis (strain HAW-EB4).